Consider the following 296-residue polypeptide: Large ribosomal subunit protein uL15m (296 aa).

A mitochondrion-targeting transit peptide spans 1 to 21 (MAGPLQGGGARALDLLRGLPR). The tract at residues 22-66 (VSLANLKPNPGSKKPERRPRGRRRGRKCGRGHKGERQRGTRPRLG) is disordered. Residues 36 to 52 (PERRPRGRRRGRKCGRG) are compositionally biased toward basic residues.

It belongs to the universal ribosomal protein uL15 family. Component of the mitochondrial large ribosomal subunit (mt-LSU). Mature mammalian 55S mitochondrial ribosomes consist of a small (28S) and a large (39S) subunit. The 28S small subunit contains a 12S ribosomal RNA (12S mt-rRNA) and 30 different proteins. The 39S large subunit contains a 16S rRNA (16S mt-rRNA), a copy of mitochondrial valine transfer RNA (mt-tRNA(Val)), which plays an integral structural role, and 52 different proteins.

The protein localises to the mitochondrion. The chain is Large ribosomal subunit protein uL15m (MRPL15) from Homo sapiens (Human).